The sequence spans 428 residues: Large envelope protein (428 aa).

Gly2 carries the N-myristoyl glycine; by host lipid modification. A pre-S1 region spans residues 2–145 (GNNIKVTFDP…PPLRDTHPHL (144 aa)). A pre-S region spans residues 2–204 (GNNIKVTFDP…PLTIGDPVLS (203 aa)). The Virion surface; in external conformation segment spans residues 2–211 (GNNIKVTFDP…VLSTEMSPSG (210 aa)). The Intravirion; in internal conformation segment spans residues 2–283 (GNNIKVTFDP…NGFRWMYLRR (282 aa)). Residue Asn3 is glycosylated (N-linked (GlcNAc...) asparagine). The disordered stretch occupies residues 110–144 (RDIPRGIVPPQTPSNRDQRRKPTPLTPPLRDTHPH). Positions 146–204 (TMKNQTGHLQGFAEGLRALTTSDHHNSAYGDPFTTLSPVVPTVSTTLSPPLTIGDPVLS) are pre-S2. The helical transmembrane segment at 212–232 (LLGLLAGLQVVYFLWTKILTI) threads the bilayer. The Intravirion; in external conformation portion of the chain corresponds to 233-283 (AQSLDWWWTSLSFPGGIPECTGQNLQFQTCKHLPTSCPPTCNGFRWMYLRR). A helical transmembrane segment spans residues 284–304 (FIIYLLVLLLFLTFLLVLLDW). The Virion surface segment spans residues 305–376 (KGLLPVCPMM…WALARFSWLS (72 aa)). A glycan (N-linked (GlcNAc...) asparagine; by host) is linked at Asn348. Residues 377–397 (LLVPLLQWLGGISLTVWLLLI) form a helical membrane-spanning segment. Topologically, residues 398 to 403 (WMIWFW) are intravirion. Residues 404–426 (GPVLMSILPPFIPIFALFFLIWA) form a helical membrane-spanning segment. Topologically, residues 427 to 428 (YI) are virion surface.

Belongs to the orthohepadnavirus major surface antigen family. In terms of assembly, in its internal form (Li-HBsAg), interacts with the capsid protein and with the isoform S. Interacts with host chaperone CANX. Associates with host chaperone CANX through its pre-S2 N glycan; this association may be essential for isoform M proper secretion. As to quaternary structure, interacts with isoform L. Interacts with the antigens of satellite virus HDV (HDVAgs); this interaction is required for encapsidation of HDV genomic RNA. Isoform M is N-terminally acetylated by host at a ratio of 90%, and N-glycosylated by host at the pre-S2 region. In terms of processing, myristoylated.

The protein localises to the virion membrane. Functionally, the large envelope protein exists in two topological conformations, one which is termed 'external' or Le-HBsAg and the other 'internal' or Li-HBsAg. In its external conformation the protein attaches the virus to cell receptors and thereby initiating infection. This interaction determines the species specificity and liver tropism. This attachment induces virion internalization predominantly through caveolin-mediated endocytosis. The large envelope protein also assures fusion between virion membrane and endosomal membrane. In its internal conformation the protein plays a role in virion morphogenesis and mediates the contact with the nucleocapsid like a matrix protein. The middle envelope protein plays an important role in the budding of the virion. It is involved in the induction of budding in a nucleocapsid independent way. In this process the majority of envelope proteins bud to form subviral lipoprotein particles of 22 nm of diameter that do not contain a nucleocapsid. This is Large envelope protein from Ground squirrel hepatitis virus (strain 27) (GSHV).